The chain runs to 117 residues: Hydrogenase maturation factor HypA (117 aa).

His-2 lines the Ni(2+) pocket. Residues Cys-73, Cys-76, Cys-89, and Cys-92 each contribute to the Zn(2+) site.

The protein belongs to the HypA/HybF family.

Functionally, involved in the maturation of [NiFe] hydrogenases. Required for nickel insertion into the metal center of the hydrogenase. In Shewanella baltica (strain OS195), this protein is Hydrogenase maturation factor HypA.